A 212-amino-acid polypeptide reads, in one-letter code: Guanylate kinase (212 aa).

A Guanylate kinase-like domain is found at 7-187 (GLLIVLSGPS…AADRIIAIIR (181 aa)). 14-21 (GPSGVGKA) is an ATP binding site.

The protein belongs to the guanylate kinase family.

Its subcellular location is the cytoplasm. The enzyme catalyses GMP + ATP = GDP + ADP. Essential for recycling GMP and indirectly, cGMP. The protein is Guanylate kinase of Onion yellows phytoplasma (strain OY-M).